We begin with the raw amino-acid sequence, 286 residues long: MAGAKEIKTKIASVKNTQKITSAMEMVAASKMRRAQERMAASRPYAESMRKVIGHVAQGSLEYKHPYLEVREAKRVGYIVVATDRGLCGGLNVNLFKKVVSDVKSWKEQGAEFEFCPIGARSVQFFKSFGGQVSAHASGLGDAPKLADLIGTVRVMLDAYNEGKLDRLYVVFNKFVNTMTQTPVIEQLLPLPKSEDDEVAHRWDYIYEPDPKALLDTLLVRYVESQVYQGVVENIASEQAARMVAMKAATDNAGTLIDDLQLVYNKARQAAITQELSEIVSGASAV.

Belongs to the ATPase gamma chain family. In terms of assembly, F-type ATPases have 2 components, CF(1) - the catalytic core - and CF(0) - the membrane proton channel. CF(1) has five subunits: alpha(3), beta(3), gamma(1), delta(1), epsilon(1). CF(0) has three main subunits: a, b and c.

The protein resides in the cell inner membrane. Its function is as follows. Produces ATP from ADP in the presence of a proton gradient across the membrane. The gamma chain is believed to be important in regulating ATPase activity and the flow of protons through the CF(0) complex. The polypeptide is ATP synthase gamma chain (Shewanella sp. (strain ANA-3)).